The sequence spans 154 residues: Endoribonuclease YbeY (154 aa).

Positions 116, 120, and 126 each coordinate Zn(2+).

This sequence belongs to the endoribonuclease YbeY family. It depends on Zn(2+) as a cofactor.

It is found in the cytoplasm. Functionally, single strand-specific metallo-endoribonuclease involved in late-stage 70S ribosome quality control and in maturation of the 3' terminus of the 16S rRNA. In Chromohalobacter salexigens (strain ATCC BAA-138 / DSM 3043 / CIP 106854 / NCIMB 13768 / 1H11), this protein is Endoribonuclease YbeY.